Consider the following 65-residue polypeptide: Large ribosomal subunit protein bL35 (65 aa).

Basic residues predominate over residues 1-16 (MPKMKTKSGAKKRFRV). Residues 1–25 (MPKMKTKSGAKKRFRVRPGGTVKRG) form a disordered region.

It belongs to the bacterial ribosomal protein bL35 family.

The polypeptide is Large ribosomal subunit protein bL35 (Herminiimonas arsenicoxydans).